Reading from the N-terminus, the 192-residue chain is Casparian strip membrane protein 2 (192 aa).

The Cytoplasmic portion of the chain corresponds to 1-31; it reads MTKDVVVEHGESSKAPLVAAPAASGVGRAAS. Residues 32-52 traverse the membrane as a helical segment; the sequence is VADVFLRFLAIVGTIASAISM. Residues 53–79 lie on the Extracellular side of the membrane; the sequence is GTTNETLPFFTQFIQFEAKYSDLPSFT. The N-linked (GlcNAc...) asparagine glycan is linked to N56. A helical transmembrane segment spans residues 80 to 100; sequence FFVAANAVVCTYLVLSIPLSI. Over 101–112 the chain is Cytoplasmic; sequence VHIVRPRARYSR. Residues 113–133 traverse the membrane as a helical segment; it reads LVLVFFDAAMLTLLTAGASAA. The Extracellular portion of the chain corresponds to 134–166; it reads AAIVYLAHKGNVRANWFAICQQFDSFCERISGS. Residues 167 to 187 traverse the membrane as a helical segment; it reads LIGSFAAMVLLIMLIFLSAFA. Topologically, residues 188–192 are cytoplasmic; that stretch reads LARRH.

It belongs to the Casparian strip membrane proteins (CASP) family. As to quaternary structure, homodimer and heterodimers.

The protein localises to the cell membrane. In terms of biological role, regulates membrane-cell wall junctions and localized cell wall deposition. Required for establishment of the Casparian strip membrane domain (CSD) and the subsequent formation of Casparian strips, a cell wall modification of the root endodermis that determines an apoplastic barrier between the intraorganismal apoplasm and the extraorganismal apoplasm and prevents lateral diffusion. This Panicum virgatum (Blackwell switchgrass) protein is Casparian strip membrane protein 2.